We begin with the raw amino-acid sequence, 1163 residues long: Spike glycoprotein (1163 aa).

A signal peptide spans 1 to 18 (MLERSLLLATLLSALCSA). Topologically, residues 19–1096 (NLFGNNSYVY…LKTYIKWPWY (1078 aa)) are extracellular. Residues Asn23, Asn51, Asn74, Asn102, Asn139, Asn145, Asn164, Asn179, Asn213, Asn238, Asn248, Asn265, Asn272, Asn277, Asn307, Asn426, Asn448, Asn514, Asn531, Asn543, Asn580, Asn592, Asn670, and Asn677 are each glycosylated (N-linked (GlcNAc...) asparagine; by host). The segment at 770–875 (IPFATQLQAR…QVDRIITGRL (106 aa)) is heptad repeat 1 (HR1). Residues 823–867 (QDVVNKQSSILTETMASLNKNFGAISSVLQDIYQQLDSIQADAQV) are a coiled coil. N-linked (GlcNAc...) asparagine; by host glycosylation is found at Asn948, Asn961, Asn980, Asn1015, Asn1039, Asn1052, and Asn1075. Residues 1025–1106 (NDDFDFDDEL…VWLAIAFLTI (82 aa)) are heptad repeat 2 (HR2). The stretch at 1056 to 1084 (PILDIGSEIDRIQGVIQGLNDSLIDLETL) forms a coiled coil. A helical membrane pass occupies residues 1097-1117 (VWLAIAFLTIIFILVLCWIFF). Over 1118 to 1163 (MTGCCGCCCGCFGIIPLMSKCGKKSSYYTTFDNDVVYEQYRPKKSV) the chain is Cytoplasmic. Residues 1160–1163 (KKSV) carry the Di-lysine motif motif.

The protein belongs to the gammacoronaviruses spike protein family. Homotrimer; each monomer consists of a S1 and a S2 subunit. The resulting peplomers protrude from the virus surface as spikes. Specific enzymatic cleavages in vivo yield mature proteins. The precursor is processed into S1 and S2 by host cell furin or furin-like protease to yield the mature S1 and S2 proteins. The cleavage site between S1 and S2 requires the optimal sequence [KR]-X-[KR]-R. Additionally, a second cleavage leads to the release of a fusion peptide after viral attachment to host cell receptor.

It localises to the virion membrane. The protein resides in the host endoplasmic reticulum-Golgi intermediate compartment membrane. Functionally, attaches the virion to the host cell membrane by interacting with sialic acids, initiating the infection. In terms of biological role, mediates fusion of the virion and cellular membranes by acting as a class I viral fusion protein. Under the current model, the protein has at least 3 conformational states: pre-fusion native state, pre-hairpin intermediate state, and post-fusion hairpin state. During viral and target cell membrane fusion, the coiled coil regions (heptad repeats) assume a trimer-of-hairpins structure, positioning the fusion peptide in close proximity to the C-terminal region of the ectodomain. The formation of this structure appears to drive apposition and subsequent fusion of viral and target cell membranes. Its function is as follows. Acts as a viral fusion peptide after S2 cleavage occurring upon virus endocytosis. This is Spike glycoprotein from Gallus gallus (Chicken).